Reading from the N-terminus, the 327-residue chain is MENVFDYEDIQLIPAKCIVNSRSECDTTVTLGKHKFKLPVVPANMQTIIDERIATYLAENNYFYIMHRFQPEKRISFIRDMQSRGLIASISVGVKADEYEFVQQLAAEHLTPEYITIDIAHGHSNAVINMIQHIKKHLPESFVIAGNVGTPEAVRELENAGADATKVGIGPGKVCITKIKTGFGTGGWQLAALRWCAKAASKPIIADGGIRTHGDVAKSIRFGATMVMIGSLFAGHEESPGETIEKDGKLYKEYFGSASEFQKGEKKNVEGKKMFVEHKGSLEDTLIEMEQDLQSSISYAGGTKLDSIRTVDYVVVKNSIFNGDKVY.

C175 serves as the catalytic Thioimidate intermediate. 204–227 contributes to the NADP(+) binding site; it reads IIADGGIRTHGDVAKSIRFGATMV.

This sequence belongs to the IMPDH/GMPR family. GuaC type 2 subfamily.

It catalyses the reaction IMP + NH4(+) + NADP(+) = GMP + NADPH + 2 H(+). Its function is as follows. Catalyzes the irreversible NADPH-dependent deamination of GMP to IMP. It functions in the conversion of nucleobase, nucleoside and nucleotide derivatives of G to A nucleotides, and in maintaining the intracellular balance of A and G nucleotides. In Bacillus cereus (strain ATCC 10987 / NRS 248), this protein is GMP reductase.